Consider the following 1088-residue polypeptide: Platelet-derived growth factor receptor alpha (1088 aa).

The first 23 residues, 1 to 23, serve as a signal peptide directing secretion; sequence MGTSQAFLVLSCLLTGPSLIVCQ. Ig-like C2-type domains follow at residues 24-112, 116-200, 201-305, 318-409, and 413-516; these read LLLP…SEIE, IYIY…FKTS, EFNV…KTVT, PTFG…FELS, and PASI…LKLV. At 24-527 the chain is on the extracellular side; that stretch reads LLLPSILPNE…PSLRSELTVA (504 aa). Cys-48 and Cys-99 are oxidised to a cystine. Residues Asn-75, Asn-102, and Asn-178 are each glycosylated (N-linked (GlcNAc...) asparagine). Cystine bridges form between Cys-149–Cys-188 and Cys-234–Cys-289. 4 N-linked (GlcNAc...) asparagine glycosylation sites follow: Asn-352, Asn-358, Asn-457, and Asn-467. Cysteines 434 and 500 form a disulfide. A helical transmembrane segment spans residues 528–548; the sequence is AAVLVLLVIVIVSLIVLVVIW. Topologically, residues 549–1088 are cytoplasmic; the sequence is KQKPRYEIRW…SSDLVEDSFL (540 aa). A phosphotyrosine; by autocatalysis mark is found at Tyr-571 and Tyr-573. Residues 592 to 953 form the Protein kinase domain; sequence LVLGRILGSG…HLSEIVENLL (362 aa). ATP contacts are provided by residues 598 to 606 and Lys-626; that span reads LGSGAFGKV. Phosphotyrosine; by autocatalysis is present on residues Tyr-719, Tyr-730, Tyr-741, Tyr-753, Tyr-761, and Tyr-767. Asp-817 serves as the catalytic Proton acceptor. Phosphotyrosine; by autocatalysis occurs at positions 848, 987, and 1017. The tract at residues 1017 to 1088 is disordered; the sequence is YIIPLPDIDP…SSDLVEDSFL (72 aa). Over residues 1040-1058 the composition is skewed to polar residues; that stretch reads SSQTSEESAIETGSSSSTF. A compositionally biased stretch (acidic residues) spans 1064–1088; that stretch reads ETIEDIDMMDDIGIDSSDLVEDSFL.

It belongs to the protein kinase superfamily. Tyr protein kinase family. CSF-1/PDGF receptor subfamily. In terms of assembly, interacts with homodimeric PDGFA, PDGFB and PDGFC, and with heterodimers formed by PDGFA and PDGFB. Monomer in the absence of bound ligand. Interaction with dimeric PDGFA, PDGFB and/or PDGFC leads to receptor dimerization, where both PDGFRA homodimers and heterodimers with PDGFRB are observed. Interacts (tyrosine phosphorylated) with SHB (via SH2 domain). Interacts (tyrosine phosphorylated) with SHF (via SH2 domain). Interacts (tyrosine phosphorylated) with SRC (via SH2 domain). Interacts (tyrosine phosphorylated) with PIK3R1. Interacts (tyrosine phosphorylated) with PLCG1 (via SH2 domain). Interacts (tyrosine phosphorylated) with CRK, GRB2 and GRB7. Interacts with CD248; this interaction promotes PDGF receptor signaling pathway. Post-translationally, ubiquitinated, leading to its internalization and degradation. Autophosphorylated on tyrosine residues upon ligand binding. Autophosphorylation occurs in trans, i.e. one subunit of the dimeric receptor phosphorylates tyrosine residues on the other subunit. Phosphorylation at Tyr-730 and Tyr-741 is important for interaction with PIK3R1. Phosphorylation at Tyr-719 and Tyr-753 is important for interaction with PTPN11. Phosphorylation at Tyr-761 is important for interaction with CRK. Phosphorylation at Tyr-571 and Tyr-573 is important for interaction with SRC and SRC family members. Phosphorylation at Tyr-987 and Tyr-1017 is important for interaction with PLCG1.

The protein resides in the cell membrane. It is found in the cell projection. The protein localises to the cilium. It localises to the golgi apparatus. The catalysed reaction is L-tyrosyl-[protein] + ATP = O-phospho-L-tyrosyl-[protein] + ADP + H(+). Present in an inactive conformation in the absence of bound ligand. Binding of PDGFA and/or PDGFB leads to dimerization and activation by autophosphorylation on tyrosine residues. Inhibited by imatinib, nilotinib and sorafenib. In terms of biological role, tyrosine-protein kinase that acts as a cell-surface receptor for PDGFA, PDGFB and PDGFC and plays an essential role in the regulation of embryonic development, cell proliferation, survival and chemotaxis. Depending on the context, promotes or inhibits cell proliferation and cell migration. Plays an important role in the differentiation of bone marrow-derived mesenchymal stem cells. Required for normal skeleton development and cephalic closure during embryonic development. Required for normal development of the mucosa lining the gastrointestinal tract, and for recruitment of mesenchymal cells and normal development of intestinal villi. Plays a role in cell migration and chemotaxis in wound healing. Plays a role in platelet activation, secretion of agonists from platelet granules, and in thrombin-induced platelet aggregation. Binding of its cognate ligands - homodimeric PDGFA, homodimeric PDGFB, heterodimers formed by PDGFA and PDGFB or homodimeric PDGFC -leads to the activation of several signaling cascades; the response depends on the nature of the bound ligand and is modulated by the formation of heterodimers between PDGFRA and PDGFRB. Phosphorylates PIK3R1, PLCG1, and PTPN11. Activation of PLCG1 leads to the production of the cellular signaling molecules diacylglycerol and inositol 1,4,5-trisphosphate, mobilization of cytosolic Ca(2+) and the activation of protein kinase C. Phosphorylates PIK3R1, the regulatory subunit of phosphatidylinositol 3-kinase, and thereby mediates activation of the AKT1 signaling pathway. Mediates activation of HRAS and of the MAP kinases MAPK1/ERK2 and/or MAPK3/ERK1. Promotes activation of STAT family members STAT1, STAT3 and STAT5A and/or STAT5B. Receptor signaling is down-regulated by protein phosphatases that dephosphorylate the receptor and its down-stream effectors, and by rapid internalization of the activated receptor. The polypeptide is Platelet-derived growth factor receptor alpha (Pdgfra) (Rattus norvegicus (Rat)).